The sequence spans 216 residues: 3,4-dihydroxy-2-butanone 4-phosphate synthase (216 aa).

D-ribulose 5-phosphate-binding positions include 33–34 (RE), Asp-38, 146–150 (RRGHT), and Glu-170. Glu-34 provides a ligand contact to Mg(2+). His-149 is a binding site for Mg(2+).

Belongs to the DHBP synthase family. As to quaternary structure, homodimer. The cofactor is Mg(2+). Mn(2+) is required as a cofactor.

It carries out the reaction D-ribulose 5-phosphate = (2S)-2-hydroxy-3-oxobutyl phosphate + formate + H(+). Its pathway is cofactor biosynthesis; riboflavin biosynthesis; 2-hydroxy-3-oxobutyl phosphate from D-ribulose 5-phosphate: step 1/1. Catalyzes the conversion of D-ribulose 5-phosphate to formate and 3,4-dihydroxy-2-butanone 4-phosphate. This chain is 3,4-dihydroxy-2-butanone 4-phosphate synthase, found in Pseudomonas putida (strain ATCC 47054 / DSM 6125 / CFBP 8728 / NCIMB 11950 / KT2440).